A 117-amino-acid polypeptide reads, in one-letter code: NADH-ubiquinone oxidoreductase chain 3 (117 aa).

The next 3 membrane-spanning stretches (helical) occupy residues 4–24 (ILIY…LGLI), 57–77 (FFLL…LLPL), and 88–108 (WPLT…FHEW).

Belongs to the complex I subunit 3 family.

It is found in the mitochondrion membrane. It catalyses the reaction a ubiquinone + NADH + 5 H(+)(in) = a ubiquinol + NAD(+) + 4 H(+)(out). In terms of biological role, core subunit of the mitochondrial membrane respiratory chain NADH dehydrogenase (Complex I) that is believed to belong to the minimal assembly required for catalysis. Complex I functions in the transfer of electrons from NADH to the respiratory chain. The immediate electron acceptor for the enzyme is believed to be ubiquinone. In Heterololigo bleekeri (Spear squid), this protein is NADH-ubiquinone oxidoreductase chain 3 (ND3).